A 200-amino-acid chain; its full sequence is NADH-quinone oxidoreductase subunit I (200 aa).

4Fe-4S ferredoxin-type domains lie at 73–102 and 112–141; these read RLLE…METT and LNYS…HGGD. 8 residues coordinate [4Fe-4S] cluster: C82, C85, C88, C92, C121, C124, C127, and C131.

The protein belongs to the complex I 23 kDa subunit family. As to quaternary structure, NDH-1 is composed of 14 different subunits. Subunits NuoA, H, J, K, L, M, N constitute the membrane sector of the complex. Requires [4Fe-4S] cluster as cofactor.

It is found in the cell inner membrane. It carries out the reaction a quinone + NADH + 5 H(+)(in) = a quinol + NAD(+) + 4 H(+)(out). Functionally, NDH-1 shuttles electrons from NADH, via FMN and iron-sulfur (Fe-S) centers, to quinones in the respiratory chain. The immediate electron acceptor for the enzyme in this species is believed to be ubiquinone. Couples the redox reaction to proton translocation (for every two electrons transferred, four hydrogen ions are translocated across the cytoplasmic membrane), and thus conserves the redox energy in a proton gradient. This chain is NADH-quinone oxidoreductase subunit I, found in Campylobacter hominis (strain ATCC BAA-381 / DSM 21671 / CCUG 45161 / LMG 19568 / NCTC 13146 / CH001A).